Reading from the N-terminus, the 194-residue chain is Ribonuclease HII (194 aa).

The RNase H type-2 domain maps to 3–193 (ILTAGVDEAG…VRNLLAQQAL (191 aa)). Positions 9, 10, and 101 each coordinate a divalent metal cation.

This sequence belongs to the RNase HII family. Mn(2+) serves as cofactor. Requires Mg(2+) as cofactor.

It localises to the cytoplasm. It catalyses the reaction Endonucleolytic cleavage to 5'-phosphomonoester.. Endonuclease that specifically degrades the RNA of RNA-DNA hybrids. This is Ribonuclease HII from Neisseria gonorrhoeae (strain ATCC 700825 / FA 1090).